Here is an 864-residue protein sequence, read N- to C-terminus: Seed linoleate 9S-lipoxygenase-2 (864 aa).

In terms of domain architecture, PLAT spans 46 to 171 (SGINIIGSTL…LYKSPRIFFA (126 aa)). Residues 174 to 864 (SYLPSETPSP…FRGIPNSISI (691 aa)) form the Lipoxygenase domain. The segment at 230 to 264 (PILGGSSTHPYPRRGRTGRYPTRKDPNSEKPATET) is disordered. Positions 251-264 (TRKDPNSEKPATET) are enriched in basic and acidic residues. Fe cation contacts are provided by His524, His529, His716, Asn720, and Ile864.

Belongs to the lipoxygenase family. The cofactor is Fe cation.

The protein localises to the cytoplasm. It catalyses the reaction (9Z,12Z)-octadecadienoate + O2 = (9S)-hydroperoxy-(10E,12Z)-octadecadienoate. Its pathway is lipid metabolism; oxylipin biosynthesis. Its function is as follows. Plant lipoxygenase may be involved in a number of diverse aspects of plant physiology including growth and development, pest resistance, and senescence or responses to wounding. It catalyzes the hydroperoxidation of lipids containing a cis,cis-1,4-pentadiene structure. The polypeptide is Seed linoleate 9S-lipoxygenase-2 (LOX1.2) (Pisum sativum (Garden pea)).